The following is a 223-amino-acid chain: UPF0641 membrane protein PJ4664.05 (223 aa).

5 helical membrane passes run 10–30 (FNSF…FNWI), 49–69 (LTVL…FSDI), 81–101 (ILLY…WSIV), 146–166 (LSIG…MLWV), and 190–210 (TIFY…LKMV).

Belongs to the UPF0641 family.

It is found in the endoplasmic reticulum membrane. The polypeptide is UPF0641 membrane protein PJ4664.05 (Schizosaccharomyces pombe (strain 972 / ATCC 24843) (Fission yeast)).